The primary structure comprises 85 residues: Large ribosomal subunit protein bL27 (85 aa).

The disordered stretch occupies residues 1–21 (MAHKKAGGSTRNGRDSRGKRL).

Belongs to the bacterial ribosomal protein bL27 family.

The chain is Large ribosomal subunit protein bL27 from Blochmanniella floridana.